We begin with the raw amino-acid sequence, 834 residues long: Leucine--tRNA ligase (834 aa).

The 'HIGH' region signature appears at 40–50 (PYPSGNIHMGH). Residues 586 to 590 (KMSKS) carry the 'KMSKS' region motif. Position 589 (Lys-589) interacts with ATP.

It belongs to the class-I aminoacyl-tRNA synthetase family.

Its subcellular location is the cytoplasm. It carries out the reaction tRNA(Leu) + L-leucine + ATP = L-leucyl-tRNA(Leu) + AMP + diphosphate. This Nitratidesulfovibrio vulgaris (strain DSM 19637 / Miyazaki F) (Desulfovibrio vulgaris) protein is Leucine--tRNA ligase.